Consider the following 429-residue polypeptide: Glutamate-1-semialdehyde 2,1-aminomutase (429 aa).

The residue at position 265 (Lys-265) is an N6-(pyridoxal phosphate)lysine.

The protein belongs to the class-III pyridoxal-phosphate-dependent aminotransferase family. HemL subfamily. As to quaternary structure, homodimer. Pyridoxal 5'-phosphate serves as cofactor.

The protein localises to the cytoplasm. It carries out the reaction (S)-4-amino-5-oxopentanoate = 5-aminolevulinate. Its pathway is porphyrin-containing compound metabolism; protoporphyrin-IX biosynthesis; 5-aminolevulinate from L-glutamyl-tRNA(Glu): step 2/2. In Legionella pneumophila subsp. pneumophila (strain Philadelphia 1 / ATCC 33152 / DSM 7513), this protein is Glutamate-1-semialdehyde 2,1-aminomutase.